A 251-amino-acid polypeptide reads, in one-letter code: Putative ATP-binding protein Rv3427c in insertion sequence (251 aa).

108 to 115 (GPVGVGKT) is an ATP binding site.

The protein belongs to the IS21/IS1162 putative ATP-binding protein family.

The sequence is that of Putative ATP-binding protein Rv3427c in insertion sequence from Mycobacterium tuberculosis (strain ATCC 25618 / H37Rv).